Consider the following 568-residue polypeptide: CRISPR-associated exonuclease Cas4/endonuclease Cas1 fusion (568 aa).

The CRISPR-associated exonuclease Cas4 stretch occupies residues 1-209 (MSVVVTRYRG…KCSLAPVCLP (209 aa)). Cysteine 43 contacts [4Fe-4S] cluster. Mn(2+)-binding residues include aspartate 95 and glutamate 108. The [4Fe-4S] cluster site is built by cysteine 198, cysteine 201, and cysteine 207. The interval 232–568 (VLHVATPGTR…PGLFATFRLR (337 aa)) is CRISPR-associated endonuclease Cas1. Mn(2+) is bound by residues glutamate 390, histidine 459, and glutamate 474.

The protein in the N-terminal section; belongs to the CRISPR-associated exonuclease Cas4 family. This sequence in the C-terminal section; belongs to the CRISPR-associated endonuclease Cas1 family. As to quaternary structure, homodimer, forms a heterotetramer with a Cas2 homodimer. [4Fe-4S] cluster is required as a cofactor. Requires Mg(2+) as cofactor. The cofactor is Mn(2+).

The enzyme catalyses exonucleolytic cleavage in the 5'- to 3'-direction to yield nucleoside 3'-phosphates.. CRISPR (clustered regularly interspaced short palindromic repeat), is an adaptive immune system that provides protection against mobile genetic elements (viruses, transposable elements and conjugative plasmids). CRISPR clusters contain spacers, sequences complementary to antecedent mobile elements, and target invading nucleic acids. CRISPR clusters are transcribed and processed into CRISPR RNA (crRNA). The Cas4 region acts as a ssDNA exonuclease, while the Cas1 region acts as a dsDNA endonuclease. Involved in the integration of spacer DNA into the CRISPR cassette. In Myxococcus xanthus (strain DK1622), this protein is CRISPR-associated exonuclease Cas4/endonuclease Cas1 fusion (cas4-cas1).